The chain runs to 455 residues: Pup--protein ligase (455 aa).

Residue Glu12 coordinates Mg(2+). Arg56 serves as a coordination point for ATP. Position 58 (Tyr58) interacts with Mg(2+). The active-site Proton acceptor is the Asp60. Residue Glu66 participates in Mg(2+) binding. Residues Thr69 and Trp422 each contribute to the ATP site.

The protein belongs to the Pup ligase/Pup deamidase family. Pup-conjugating enzyme subfamily.

It catalyses the reaction ATP + [prokaryotic ubiquitin-like protein]-L-glutamate + [protein]-L-lysine = ADP + phosphate + N(6)-([prokaryotic ubiquitin-like protein]-gamma-L-glutamyl)-[protein]-L-lysine.. The protein operates within protein degradation; proteasomal Pup-dependent pathway. Its pathway is protein modification; protein pupylation. Its function is as follows. Catalyzes the covalent attachment of the prokaryotic ubiquitin-like protein modifier Pup to the proteasomal substrate proteins, thereby targeting them for proteasomal degradation. This tagging system is termed pupylation. The ligation reaction involves the side-chain carboxylate of the C-terminal glutamate of Pup and the side-chain amino group of a substrate lysine. The sequence is that of Pup--protein ligase from Acidimicrobium ferrooxidans (strain DSM 10331 / JCM 15462 / NBRC 103882 / ICP).